The primary structure comprises 132 residues: UPF0299 membrane protein YohJ (132 aa).

4 consecutive transmembrane segments (helical) span residues 8-28 (IWQYVRAFVLIYACLYAGIFI), 31-51 (LLPVTIPGSIIGMLILFVLLA), 63-83 (GCYLLIRYMALLFVPIGVGVM), and 93-113 (FGPVVVSCAISTLVVFLVVSW).

It belongs to the UPF0299 family.

It is found in the cell inner membrane. This Escherichia fergusonii (strain ATCC 35469 / DSM 13698 / CCUG 18766 / IAM 14443 / JCM 21226 / LMG 7866 / NBRC 102419 / NCTC 12128 / CDC 0568-73) protein is UPF0299 membrane protein YohJ.